A 1222-amino-acid chain; its full sequence is BOS complex subunit NOMO3 (1222 aa).

The N-terminal stretch at 1–31 (MLVGQGAGPLGPAVVTAAVVLLLSGVGPAHG) is a signal peptide. The Extracellular portion of the chain corresponds to 32 to 1155 (SEDIVVGCGG…NPTRKLPEQD (1124 aa)). N-linked (GlcNAc...) asparagine glycosylation is found at N50, N218, and N618. Residues 1156–1176 (IAQGSYIALPLTLLVLLAGYN) traverse the membrane as a helical segment. At 1177 to 1222 (HDKLIPLLLQLTSRLQGVGALGQAASDNSGPEDAKRQAKKQKTRRT) the chain is on the cytoplasmic side. The disordered stretch occupies residues 1198–1222 (GQAASDNSGPEDAKRQAKKQKTRRT). Over residues 1213–1222 (QAKKQKTRRT) the composition is skewed to basic residues.

As to quaternary structure, component of the back of Sec61 (BOS) complex, composed of NCLN/Nicalin, NOMO (NOMO1, NOMO2 or NOMO3) and TMEM147. The BOS complex is part of the multi-pass translocon (MPT) complex, composed of three subcomplexes, the GEL complex (composed of RAB5IF/OPTI and TMCO1), the BOS complex (composed of NCLN/Nicalin, NOMO and TMEM147) and the PAT complex (composed of WDR83OS/Asterix and CCDC47). The MPT complex associates with the SEC61 complex. Due to the strong similarity between NOMO1, NOMO2 and NOMO3, similar interaction pattern probably occur for the three gene copies.

It localises to the endoplasmic reticulum membrane. In terms of biological role, component of the multi-pass translocon (MPT) complex that mediates insertion of multi-pass membrane proteins into the lipid bilayer of membranes. The MPT complex takes over after the SEC61 complex: following membrane insertion of the first few transmembrane segments of proteins by the SEC61 complex, the MPT complex occludes the lateral gate of the SEC61 complex to promote insertion of subsequent transmembrane regions. The protein is BOS complex subunit NOMO3 (NOMO3) of Homo sapiens (Human).